A 351-amino-acid chain; its full sequence is Photosystem II D2 protein (351 aa).

Residues 39–59 traverse the membrane as a helical segment; sequence CAFLALGGWLTGTTFVTSWYT. Position 116 (H116) interacts with chlorophyll a. The helical transmembrane segment at 123-139 threads the bilayer; it reads GFMLRQFEIARLVGIRP. Residues Q128 and N141 each coordinate pheophytin a. The chain crosses the membrane as a helical span at residues 151–164; that stretch reads VFVSVFLMYPLGQS. H196 lines the chlorophyll a pocket. The helical transmembrane segment at 206–226 threads the bilayer; sequence GALLCAIHGATVENTLFEDGE. The a plastoquinone site is built by H213 and F260. Residue H213 participates in Fe cation binding. Fe cation is bound at residue H267. Residues 277-293 form a helical membrane-spanning segment; it reads GLWMSAVGIVGLALNLR.

Belongs to the reaction center PufL/M/PsbA/D family. As to quaternary structure, PSII is composed of 1 copy each of membrane proteins PsbA, PsbB, PsbC, PsbD, PsbE, PsbF, PsbH, PsbI, PsbJ, PsbK, PsbL, PsbM, PsbT, PsbX, PsbY, PsbZ, Psb30/Ycf12, peripheral proteins PsbO, CyanoQ (PsbQ), PsbU, PsbV and a large number of cofactors. It forms dimeric complexes. Requires The D1/D2 heterodimer binds P680, chlorophylls that are the primary electron donor of PSII, and subsequent electron acceptors. It shares a non-heme iron and each subunit binds pheophytin, quinone, additional chlorophylls, carotenoids and lipids. There is also a Cl(-1) ion associated with D1 and D2, which is required for oxygen evolution. The PSII complex binds additional chlorophylls, carotenoids and specific lipids. as cofactor.

It is found in the cellular thylakoid membrane. The enzyme catalyses 2 a plastoquinone + 4 hnu + 2 H2O = 2 a plastoquinol + O2. In terms of biological role, photosystem II (PSII) is a light-driven water:plastoquinone oxidoreductase that uses light energy to abstract electrons from H(2)O, generating O(2) and a proton gradient subsequently used for ATP formation. It consists of a core antenna complex that captures photons, and an electron transfer chain that converts photonic excitation into a charge separation. The D1/D2 (PsbA/PsbD) reaction center heterodimer binds P680, the primary electron donor of PSII as well as several subsequent electron acceptors. D2 is needed for assembly of a stable PSII complex. The protein is Photosystem II D2 protein of Nostoc sp. (strain PCC 7120 / SAG 25.82 / UTEX 2576).